Here is a 118-residue protein sequence, read N- to C-terminus: Ribonuclease P protein component (118 aa).

This sequence belongs to the RnpA family. Consists of a catalytic RNA component (M1 or rnpB) and a protein subunit.

It catalyses the reaction Endonucleolytic cleavage of RNA, removing 5'-extranucleotides from tRNA precursor.. In terms of biological role, RNaseP catalyzes the removal of the 5'-leader sequence from pre-tRNA to produce the mature 5'-terminus. It can also cleave other RNA substrates such as 4.5S RNA. The protein component plays an auxiliary but essential role in vivo by binding to the 5'-leader sequence and broadening the substrate specificity of the ribozyme. In Enterococcus faecalis (strain ATCC 700802 / V583), this protein is Ribonuclease P protein component.